The chain runs to 501 residues: ATP synthase subunit alpha (501 aa).

169–176 (GDRQTGKT) contacts ATP.

Belongs to the ATPase alpha/beta chains family. In terms of assembly, F-type ATPases have 2 components, CF(1) - the catalytic core - and CF(0) - the membrane proton channel. CF(1) has five subunits: alpha(3), beta(3), gamma(1), delta(1), epsilon(1). CF(0) has three main subunits: a(1), b(2) and c(9-12). The alpha and beta chains form an alternating ring which encloses part of the gamma chain. CF(1) is attached to CF(0) by a central stalk formed by the gamma and epsilon chains, while a peripheral stalk is formed by the delta and b chains.

It localises to the cell membrane. The catalysed reaction is ATP + H2O + 4 H(+)(in) = ADP + phosphate + 5 H(+)(out). In terms of biological role, produces ATP from ADP in the presence of a proton gradient across the membrane. The alpha chain is a regulatory subunit. This Streptococcus mutans serotype c (strain ATCC 700610 / UA159) protein is ATP synthase subunit alpha.